The sequence spans 255 residues: Proteasome subunit alpha (255 aa).

Belongs to the peptidase T1A family. In terms of assembly, the 20S proteasome core is composed of 14 alpha and 14 beta subunits that assemble into four stacked heptameric rings, resulting in a barrel-shaped structure. The two inner rings, each composed of seven catalytic beta subunits, are sandwiched by two outer rings, each composed of seven alpha subunits. The catalytic chamber with the active sites is on the inside of the barrel. Has a gated structure, the ends of the cylinder being occluded by the N-termini of the alpha-subunits. Is capped at one or both ends by the proteasome regulatory ATPase, PAN.

Its subcellular location is the cytoplasm. With respect to regulation, the formation of the proteasomal ATPase PAN-20S proteasome complex, via the docking of the C-termini of PAN into the intersubunit pockets in the alpha-rings, triggers opening of the gate for substrate entry. Interconversion between the open-gate and close-gate conformations leads to a dynamic regulation of the 20S proteasome proteolysis activity. In terms of biological role, component of the proteasome core, a large protease complex with broad specificity involved in protein degradation. The sequence is that of Proteasome subunit alpha from Natronomonas pharaonis (strain ATCC 35678 / DSM 2160 / CIP 103997 / JCM 8858 / NBRC 14720 / NCIMB 2260 / Gabara) (Halobacterium pharaonis).